We begin with the raw amino-acid sequence, 123 residues long: Small ribosomal subunit protein uS12 (123 aa).

Position 89 is a 3-methylthioaspartic acid (aspartate 89). Positions 104-123 (SVGVKDRKKSRSKYGAKRPK) are disordered. Residues 109 to 123 (DRKKSRSKYGAKRPK) show a composition bias toward basic residues.

Belongs to the universal ribosomal protein uS12 family. Part of the 30S ribosomal subunit. Contacts proteins S8 and S17. May interact with IF1 in the 30S initiation complex.

With S4 and S5 plays an important role in translational accuracy. Its function is as follows. Interacts with and stabilizes bases of the 16S rRNA that are involved in tRNA selection in the A site and with the mRNA backbone. Located at the interface of the 30S and 50S subunits, it traverses the body of the 30S subunit contacting proteins on the other side and probably holding the rRNA structure together. The combined cluster of proteins S8, S12 and S17 appears to hold together the shoulder and platform of the 30S subunit. This is Small ribosomal subunit protein uS12 from Geotalea daltonii (strain DSM 22248 / JCM 15807 / FRC-32) (Geobacter daltonii).